We begin with the raw amino-acid sequence, 359 residues long: MLTLSDFDFDLPPELIAQTALPDRTASRLLAVRRTEDAVHFEDRQFADLVDYLRPGDLLVFNDTRVIKARFFGHKASGGKVEVLVERLLDEHTVLAQIRSSKSPVEGTSLRLADAFDVTVGPRAEPFFTLRFPQPALDLIEQYGRLPLPPYIEHDPDSFDETRYQTVYARNPGAVAAPTAGLHFDDALFAKLDAMGIRRGFLTLHVGAGTFQPVRVENIAEHRMHSEWYEITPELAEAIRATRAAGGRVIAVGTTSMRALESAAQPDGTLNACSGETDIFITPGYRFRAVDLLVTNFHLPKSTLLMLVSAFAGMSAIREAYQHAIAQRYRFFSYGDAMLLTRAPTEPGEPGEPGETQSL.

The protein belongs to the QueA family. In terms of assembly, monomer.

The protein localises to the cytoplasm. It catalyses the reaction 7-aminomethyl-7-carbaguanosine(34) in tRNA + S-adenosyl-L-methionine = epoxyqueuosine(34) in tRNA + adenine + L-methionine + 2 H(+). Its pathway is tRNA modification; tRNA-queuosine biosynthesis. Functionally, transfers and isomerizes the ribose moiety from AdoMet to the 7-aminomethyl group of 7-deazaguanine (preQ1-tRNA) to give epoxyqueuosine (oQ-tRNA). The sequence is that of S-adenosylmethionine:tRNA ribosyltransferase-isomerase from Ralstonia pickettii (strain 12J).